Reading from the N-terminus, the 329-residue chain is tRNA pseudouridine synthase B (329 aa).

Residue His43 coordinates substrate. Asp48 functions as the Nucleophile in the catalytic mechanism. Substrate-binding residues include Tyr76, Tyr179, and Leu200.

It belongs to the pseudouridine synthase TruB family. Type 1 subfamily.

The enzyme catalyses uridine(55) in tRNA = pseudouridine(55) in tRNA. Its function is as follows. Responsible for synthesis of pseudouridine from uracil-55 in the psi GC loop of transfer RNAs. This is tRNA pseudouridine synthase B from Yersinia enterocolitica serotype O:8 / biotype 1B (strain NCTC 13174 / 8081).